The sequence spans 274 residues: Protein FRG1 homolog (274 aa).

Positions 20-36 (KKNLFKVGKEKKKKNKD) match the Nuclear localization signal motif. A disordered region spans residues 27–46 (GKEKKKKNKDDKEKIDPDTV). The segment covering 34–43 (NKDDKEKIDP) has biased composition (basic and acidic residues). The Bipartite nuclear localization signal signature appears at 252-268 (QADGSAHELLLDRRMKM).

The protein belongs to the FRG1 family.

The protein localises to the nucleus. Its subcellular location is the cajal body. The protein resides in the nucleolus. It localises to the cytoplasm. Functionally, binds to mRNA in a sequence-independent manner. May play a role in regulation of pre-mRNA splicing or in the assembly of rRNA into ribosomal subunits. May be involved in mRNA transport. May be involved in epigenetic regulation of muscle differentiation through regulation of activity of the histone-lysine N-methyltransferase KMT5B. The sequence is that of Protein FRG1 homolog (frg-1) from Caenorhabditis elegans.